Here is a 313-residue protein sequence, read N- to C-terminus: MLDNVLRIATRQSPLALWQAHYVKDKLMASHPGLVVELVPMVTRGDVILDTPLAKVGGKGLFVKELEVALLENRADIAVHSMKDVPVEFPQGLGLVTICEREDPRDAFVSNNYDSLDALPAGSIVGTSSLRRQCQLAERRPDLIIRSLRGNVGTRLSKLDNGEYDAIILAVAGLKRLGLESRIRAALPPEISLPAVGQGAVGIECRLDDTRTRELLAALNHHETALRVTAERAMNTRLEGGCQVPIGSYAELIDGEIWLRALVGAPDGSQIIRGERRGAPQNAEQMGISLAEELLNNGAREILAEVYNGDAPA.

Residue cysteine 242 is modified to S-(dipyrrolylmethanemethyl)cysteine.

It belongs to the HMBS family. Monomer. Dipyrromethane serves as cofactor.

The enzyme catalyses 4 porphobilinogen + H2O = hydroxymethylbilane + 4 NH4(+). The protein operates within porphyrin-containing compound metabolism; protoporphyrin-IX biosynthesis; coproporphyrinogen-III from 5-aminolevulinate: step 2/4. In terms of biological role, tetrapolymerization of the monopyrrole PBG into the hydroxymethylbilane pre-uroporphyrinogen in several discrete steps. In Escherichia coli (strain SE11), this protein is Porphobilinogen deaminase.